The sequence spans 828 residues: Kinesin-associated protein 3 (828 aa).

3 ARM repeats span residues Y332–F372, D373–Q411, and D577–V611.

Heterotrimer of a 115 kDa subunit (KAP115) and two kinesin-like subunits of 95 kDa (KRP95) and 85 kDa (KRP85).

Binds to the tail domain of the KRP85/KRP95 heterodimer to form a heterotrimeric kinesin-II complex and may regulate the spindle vesicle targeting of this complex. This is Kinesin-associated protein 3 (KAP115) from Strongylocentrotus purpuratus (Purple sea urchin).